Consider the following 71-residue polypeptide: Exodeoxyribonuclease 7 small subunit (71 aa).

This sequence belongs to the XseB family. Heterooligomer composed of large and small subunits.

Its subcellular location is the cytoplasm. It catalyses the reaction Exonucleolytic cleavage in either 5'- to 3'- or 3'- to 5'-direction to yield nucleoside 5'-phosphates.. Bidirectionally degrades single-stranded DNA into large acid-insoluble oligonucleotides, which are then degraded further into small acid-soluble oligonucleotides. In Clostridium botulinum (strain ATCC 19397 / Type A), this protein is Exodeoxyribonuclease 7 small subunit.